Consider the following 517-residue polypeptide: Glycosyltransferase family 92 protein F55C10.4 (517 aa).

The chain crosses the membrane as a helical span at residues 9–31 (FLKYFIIFTFFCVTFCFLKLCLG). Positions 156-454 (KPVIFCVSPQ…FKCYNESFYH (299 aa)) constitute a GT92 domain.

Belongs to the glycosyltransferase 92 family.

The protein localises to the membrane. This Caenorhabditis elegans protein is Glycosyltransferase family 92 protein F55C10.4.